The chain runs to 922 residues: Neuropilin-1 (922 aa).

The first 21 residues, 1–21 (MERGLPLLCATLALALALAGA), serve as a signal peptide directing secretion. Residues 22–855 (FRSDKCGGTI…PGNVLKTLDP (834 aa)) lie on the Extracellular side of the membrane. Cystine bridges form between C27/C54, C82/C104, and C147/C173. CUB domains lie at 27–141 (CGGT…YEIF) and 147–265 (CSQN…YSVL). An N-linked (GlcNAc...) asparagine glycan is attached at N150. Ca(2+) contacts are provided by E195, D209, and D250. A disulfide bond links C206 and C228. Residues N261, N300, and N522 are each glycosylated (N-linked (GlcNAc...) asparagine). 2 disulfides stabilise this stretch: C275/C424 and C431/C583. 2 F5/8 type C domains span residues 275-424 (CMEA…VYGC) and 431-583 (CSGM…LLGC). S612 carries an O-linked (Xyl...) (chondroitin sulfate) serine; alternate glycan. S612 carries O-linked (Xyl...) (heparan sulfate) serine; alternate glycosylation. The MAM domain occupies 645 to 811 (TYGFNCEFGW…NHIPQEDCAK (167 aa)). O-linked (Xyl...) (chondroitin sulfate) serine glycosylation is present at S829. N-linked (GlcNAc...) asparagine glycosylation occurs at N841. A helical transmembrane segment spans residues 856–880 (ILITIIAMSALGVLLGAVCGVVLYC). Residues 881 to 922 (ACWHNGMSERNLSALENYNFELVDGVKLKKDKLNPQSNYSEA) lie on the Cytoplasmic side of the membrane. Residue S893 is modified to Phosphoserine.

It belongs to the neuropilin family. Homodimer, and heterodimer with NRP2. Binds PLXNB1. Interacts with FER. Interacts with VEGFA. Interacts with ABCB8/MITOSUR in mitochondria. As to expression, found in the embryonic nervous system. Expressed in dorsal root ganglia.

The protein localises to the mitochondrion membrane. It localises to the cell membrane. The protein resides in the cytoplasm. Cell-surface receptor involved in the development of the cardiovascular system, in angiogenesis, in the formation of certain neuronal circuits and in organogenesis outside the nervous system. Mediates the chemorepulsant activity of semaphorins. Recognizes a C-end rule (CendR) motif R/KXXR/K on its ligands which causes cellular internalization and vascular leakage. It binds to semaphorin 3A, the PLGF-2 isoform of PGF, the VEGF165 isoform of VEGFA and VEGFB. Coexpression with KDR results in increased VEGF165 binding to KDR as well as increased chemotaxis. Regulates VEGF-induced angiogenesis. Binding to VEGFA initiates a signaling pathway needed for motor neuron axon guidance and cell body migration, including for the caudal migration of facial motor neurons from rhombomere 4 to rhombomere 6 during embryonic development. Regulates mitochondrial iron transport via interaction with ABCB8/MITOSUR. This is Neuropilin-1 (Nrp1) from Rattus norvegicus (Rat).